A 911-amino-acid chain; its full sequence is Gag-Pro polyprotein (911 aa).

Residues 101 to 161 (AAVAQTEEIL…TKKPKRFPVL (61 aa)) constitute a propeptide that is removed on maturation. Polar residues-rich tracts occupy residues 113–125 (NSQT…SQNP) and 140–152 (KSSS…LSST). Residues 113 to 178 (NSQTDLTKTS…DPEDPNPSEV (66 aa)) are disordered. Positions 202–205 (PPPY) match the PPXY motif motif. Residues 210 to 213 (PSAP) carry the PTAP/PSAP motif motif. The stretch at 216–257 (MAVVNPKEELKEKIAQLEEQIKLEELHQALISKLQKLKTGNE) forms a coiled coil. A disordered region spans residues 260-279 (THPDTAGGLSRTPHWPGQHI). 2 consecutive CCHC-type zinc fingers follow at residues 547 to 564 (GCCF…NCHE) and 576 to 593 (GLCP…ECKS). A disordered region spans residues 592–626 (KSKTDNQGNPIPPHQGNRVEGPAPGPETSLWGSQL). The Peptidase A2 domain occupies 780-856 (FTGLIDTGAD…LPVNLWGRDL (77 aa)). Residue Asp785 is the Protease; shared with dimeric partner of the active site. Residues 867-911 (PNDIVTAQMLAQGYSPGKGLGKKENGILHPIPNQGQSNKKGFGNF) form the G-patch domain.

Homodimer. As to quaternary structure, interacts with the reverse transcriptase/ribonuclease H. In terms of assembly, homotrimer. Released by autocatalytic processing. The protease can undergo further autoprocessing to yield 2 shorter but enzymatically active forms of 12 kDa and 13 kDa without the GDP domain. the 12 kDa form is monomeric. In terms of processing, myristoylated. Myristoylation of the matrix (MA) domain mediates the transport and binding of Gag polyproteins to the host plasma membrane and is required for the assembly of viral particles. Post-translationally, specific enzymatic cleavages in vivo yield mature proteins.

Its subcellular location is the virion. The catalysed reaction is dUTP + H2O = dUMP + diphosphate + H(+). In terms of biological role, matrix protein. Nucleocapsid protein p14: Nucleocapsid protein. Its function is as follows. Capsid protein. Functionally, the aspartyl protease mediates proteolytic cleavages of Gag and Gag-Pol polyproteins during or shortly after the release of the virion from the plasma membrane. Cleavages take place as an ordered, step-wise cascade to yield mature proteins. This process is called maturation. Displays maximal activity during the budding process just prior to particle release from the cell. In terms of biological role, enhances the activity of the reverse transcriptase. May be part of the mature RT. The sequence is that of Gag-Pro polyprotein (gag-pro) from Mason-Pfizer monkey virus (MPMV).